We begin with the raw amino-acid sequence, 1451 residues long: Dicer-like protein 2 (1451 aa).

The disordered stretch occupies residues 34 to 53 (YDGHLSEEDSPGGKPRPKEQ). Residues 70–247 (MLEASLKENI…LKRLESTLDA (178 aa)) form the Helicase ATP-binding domain. 83-90 (MDTGSGKT) contacts ATP. Positions 190–193 (DEAH) match the DEAH box motif. The 171-residue stretch at 412 to 582 (KVQRIIEVLL…RLEAIENSEA (171 aa)) folds into the Helicase C-terminal domain. Positions 603–704 (AKSHLQHFVS…LPLRDRLELE (102 aa)) constitute a Dicer dsRNA-binding fold domain. RNase III domains lie at 968 to 1111 (AAEL…VDGG) and 1153 to 1351 (LQLL…VDAG). Glu-1192 serves as a coordination point for Mg(2+). Residues 1253–1272 (EGDSDSKSSGDSTSDKASPR) are disordered. Mg(2+)-binding residues include Asp-1337 and Glu-1340.

The protein belongs to the helicase family. Dicer subfamily. Requires Mg(2+) as cofactor. Mn(2+) serves as cofactor.

Its function is as follows. Dicer-like endonuclease involved in cleaving double-stranded RNA in the RNA interference (RNAi) pathway. Produces 21 to 25 bp dsRNAs (siRNAs) which target the selective destruction of homologous RNAs leading to sequence-specific suppression of gene expression, called post-transcriptional gene silencing (PTGS). Part of a broad host defense, DCL-2 is involved in antiviral defense against mycoviruses like the hypovirus CHV1-EP713 and the reovirus MyRV1-Cp9B21. In Cryphonectria parasitica (Chestnut blight fungus), this protein is Dicer-like protein 2 (DCL-2).